Reading from the N-terminus, the 132-residue chain is Small ribosomal subunit protein uS8 (132 aa).

The protein belongs to the universal ribosomal protein uS8 family. In terms of assembly, part of the 30S ribosomal subunit. Contacts proteins S5 and S12.

Its function is as follows. One of the primary rRNA binding proteins, it binds directly to 16S rRNA central domain where it helps coordinate assembly of the platform of the 30S subunit. The chain is Small ribosomal subunit protein uS8 from Bifidobacterium adolescentis (strain ATCC 15703 / DSM 20083 / NCTC 11814 / E194a).